The chain runs to 340 residues: Cobalt-precorrin-5B C(1)-methyltransferase (340 aa).

Belongs to the CbiD family.

It catalyses the reaction Co-precorrin-5B + S-adenosyl-L-methionine = Co-precorrin-6A + S-adenosyl-L-homocysteine. It participates in cofactor biosynthesis; adenosylcobalamin biosynthesis; cob(II)yrinate a,c-diamide from sirohydrochlorin (anaerobic route): step 6/10. Its function is as follows. Catalyzes the methylation of C-1 in cobalt-precorrin-5B to form cobalt-precorrin-6A. In Pyrobaculum aerophilum (strain ATCC 51768 / DSM 7523 / JCM 9630 / CIP 104966 / NBRC 100827 / IM2), this protein is Cobalt-precorrin-5B C(1)-methyltransferase.